Consider the following 199-residue polypeptide: ATP-dependent Clp protease proteolytic subunit (199 aa).

Residue Ser-97 is the Nucleophile of the active site. His-122 is an active-site residue.

It belongs to the peptidase S14 family. In terms of assembly, fourteen ClpP subunits assemble into 2 heptameric rings which stack back to back to give a disk-like structure with a central cavity, resembling the structure of eukaryotic proteasomes.

The protein localises to the cytoplasm. The catalysed reaction is Hydrolysis of proteins to small peptides in the presence of ATP and magnesium. alpha-casein is the usual test substrate. In the absence of ATP, only oligopeptides shorter than five residues are hydrolyzed (such as succinyl-Leu-Tyr-|-NHMec, and Leu-Tyr-Leu-|-Tyr-Trp, in which cleavage of the -Tyr-|-Leu- and -Tyr-|-Trp bonds also occurs).. Its function is as follows. Cleaves peptides in various proteins in a process that requires ATP hydrolysis. Has a chymotrypsin-like activity. Plays a major role in the degradation of misfolded proteins. This chain is ATP-dependent Clp protease proteolytic subunit, found in Pelobacter propionicus (strain DSM 2379 / NBRC 103807 / OttBd1).